The chain runs to 702 residues: Capsid vertex component 1 (702 aa).

Positions 200-244 (MGESGTPTPQASSVSGGAGPAVVGTPDPPISPEEQLTAPGGDTAT) are disordered. Positions 210-224 (ASSVSGGAGPAVVGT) are enriched in low complexity.

This sequence belongs to the herpesviridae CVC1 protein family. In terms of assembly, interacts (via C-terminus) with capsid vertex component 2/CVC2.

The protein resides in the virion. It is found in the host nucleus. Capsid vertex-specific component that plays a role during viral DNA encapsidation, assuring correct genome cleavage and presumably stabilizing capsids that contain full-length viral genomes. In Homo sapiens (Human), this protein is Capsid vertex component 1.